The sequence spans 147 residues: Large ribosomal subunit protein bL9 (147 aa).

Belongs to the bacterial ribosomal protein bL9 family.

In terms of biological role, binds to the 23S rRNA. In Clostridium botulinum (strain 657 / Type Ba4), this protein is Large ribosomal subunit protein bL9.